A 138-amino-acid polypeptide reads, in one-letter code: Cysteine desulfuration protein SufE (138 aa).

The active-site Cysteine persulfide intermediate is the Cys-51.

The protein belongs to the SufE family. In terms of assembly, homodimer. Interacts with SufS.

The protein resides in the cytoplasm. Its pathway is cofactor biosynthesis; iron-sulfur cluster biosynthesis. Functionally, participates in cysteine desulfuration mediated by SufS. Cysteine desulfuration mobilizes sulfur from L-cysteine to yield L-alanine and constitutes an essential step in sulfur metabolism for biosynthesis of a variety of sulfur-containing biomolecules. Functions as a sulfur acceptor for SufS, by mediating the direct transfer of the sulfur atom from the S-sulfanylcysteine of SufS, an intermediate product of cysteine desulfuration process. The chain is Cysteine desulfuration protein SufE from Citrobacter koseri (strain ATCC BAA-895 / CDC 4225-83 / SGSC4696).